The chain runs to 362 residues: Mannose-1-phosphate guanyltransferase (362 aa).

The protein belongs to the transferase hexapeptide repeat family.

The protein resides in the cytoplasm. The enzyme catalyses alpha-D-mannose 1-phosphate + GTP + H(+) = GDP-alpha-D-mannose + diphosphate. It participates in nucleotide-sugar biosynthesis; GDP-alpha-D-mannose biosynthesis; GDP-alpha-D-mannose from alpha-D-mannose 1-phosphate (GTP route): step 1/1. Involved in cell wall synthesis where it is required for glycosylation. Involved in cell cycle progression through cell-size checkpoint. The sequence is that of Mannose-1-phosphate guanyltransferase (MPG1) from Debaryomyces hansenii (strain ATCC 36239 / CBS 767 / BCRC 21394 / JCM 1990 / NBRC 0083 / IGC 2968) (Yeast).